The chain runs to 266 residues: Arcelin-4 (266 aa).

The signal sequence occupies residues 1 to 21 (MGSSKLLSLALLLVLLTHANS). Residues Asn28 and Asn92 are each glycosylated (N-linked (GlcNAc...) asparagine).

It belongs to the leguminous lectin family.

Seed storage. This carbohydrate-binding lectin has toxic effects on the important bean bruchid pests, Z.subfasciatus and A.obtectus. The protein is Arcelin-4 (ARC4) of Phaseolus vulgaris (Kidney bean).